The primary structure comprises 176 residues: UPF0262 protein GbCGDNIH1_1393 (176 aa).

Belongs to the UPF0262 family.

In Granulibacter bethesdensis (strain ATCC BAA-1260 / CGDNIH1), this protein is UPF0262 protein GbCGDNIH1_1393.